Here is a 246-residue protein sequence, read N- to C-terminus: Ribonuclease PH (246 aa).

Phosphate is bound by residues arginine 91 and 129–131 (GTR).

This sequence belongs to the RNase PH family. As to quaternary structure, homohexameric ring arranged as a trimer of dimers.

It carries out the reaction tRNA(n+1) + phosphate = tRNA(n) + a ribonucleoside 5'-diphosphate. Phosphorolytic 3'-5' exoribonuclease that plays an important role in tRNA 3'-end maturation. Removes nucleotide residues following the 3'-CCA terminus of tRNAs; can also add nucleotides to the ends of RNA molecules by using nucleoside diphosphates as substrates, but this may not be physiologically important. Probably plays a role in initiation of 16S rRNA degradation (leading to ribosome degradation) during starvation. This chain is Ribonuclease PH, found in Burkholderia ambifaria (strain MC40-6).